The chain runs to 294 residues: MYB-like transcription factor ODO1 (294 aa).

2 HTH myb-type domains span residues 9 to 61 and 62 to 116; these read KLGV…TNYL and RPDL…KKKL. 2 consecutive DNA-binding regions (H-T-H motif) follow at residues 37–61 and 89–112; these read WRAV…TNYL and WSKI…NTHI. Disordered stretches follow at residues 128–152 and 171–191; these read PLKK…NGHQ and TEFD…NSSC.

In terms of tissue distribution, restricted to the petals, with the highest expression in the limb, probably in both epidermal and mesophyll cell layers.

It is found in the nucleus. Its function is as follows. R2R3 MYB-type transcription factor controlling the production of volatile organic compounds (VOCs), including floral volatile benzenoids and phenylpropanoids (FVBP), in flowers of fragrant cultivars (e.g. cv. Mitchell and cv. V26) by regulating the shikimate pathway, via the activation of several genes (e.g. EPSPS, ADT1, PAL1, CFAT and CCoAOMT1). This scent, mostly produced in the evening and night by the petals, attracts the pollinators (e.g. the night-active hawkmoth pollinator Manduca sexta). Promotes the expression of ABCG1 in petals three hours before the onset of volatile scent emission. Anthocyanins production is not controlled by ODO1 as color and scent are produced at different stages of development. Seems to trigger a negative feed-back loop that represses the expression of EOBI. The protein is MYB-like transcription factor ODO1 of Petunia hybrida (Petunia).